We begin with the raw amino-acid sequence, 427 residues long: Mucorpepsin (427 aa).

An N-terminal signal peptide occupies residues Met1–Ala22. Residues Arg23–Phe66 constitute a propeptide, activation peptide. Positions Tyr86 to Ala418 constitute a Peptidase A1 domain. Asp104 is a catalytic residue. Cys117 and Cys123 are disulfide-bonded. The N-linked (GlcNAc...) asparagine glycan is linked to Asn254. Asp303 is an active-site residue. Cys338 and Cys382 are oxidised to a cystine.

The protein belongs to the peptidase A1 family.

It carries out the reaction Hydrolysis of proteins, favoring hydrophobic residues at P1 and P1'. Clots milk. Does not accept Lys at P1, and hence does not activate trypsinogen.. Its function is as follows. This enzyme, capable of clotting milk is frequently used for cheese production. The protein is Mucorpepsin of Rhizomucor pusillus.